We begin with the raw amino-acid sequence, 225 residues long: 2-amino-5-formylamino-6-ribosylaminopyrimidin-4(3H)-one 5'-monophosphate deformylase (225 aa).

4 residues coordinate Fe cation: glutamate 28, histidine 30, aspartate 39, and histidine 107.

Belongs to the creatininase superfamily. FAPy deformylase family. As to quaternary structure, homodimer. Fe(2+) is required as a cofactor. Requires Zn(2+) as cofactor.

The enzyme catalyses 2-amino-5-formylamino-6-(5-phospho-D-ribosylamino)pyrimidin-4(3H)-one + H2O = 2,5-diamino-6-(1-D-ribosylamino)pyrimidin-4(3H)-one 5'-phosphate + formate + H(+). The protein operates within cofactor biosynthesis; coenzyme F420 biosynthesis. It participates in cofactor biosynthesis; riboflavin biosynthesis. In terms of biological role, catalyzes the hydrolysis of the formamide of 2-amino-5-formylamino-6-ribosylamino-4(3H)-pyrimidinone 5'-monophosphate (FAPy) to form 2,5-diamino-6-ribosylamino-4(3H)-pyrimidinone 5'-phosphate (APy). The sequence is that of 2-amino-5-formylamino-6-ribosylaminopyrimidin-4(3H)-one 5'-monophosphate deformylase from Methanocaldococcus sp. (strain FS406-22).